A 97-amino-acid chain; its full sequence is Large ribosomal subunit protein uL23 (97 aa).

Belongs to the universal ribosomal protein uL23 family. Part of the 50S ribosomal subunit. Contacts protein L29, and trigger factor when it is bound to the ribosome.

In terms of biological role, one of the early assembly proteins it binds 23S rRNA. One of the proteins that surrounds the polypeptide exit tunnel on the outside of the ribosome. Forms the main docking site for trigger factor binding to the ribosome. The chain is Large ribosomal subunit protein uL23 from Brucella anthropi (strain ATCC 49188 / DSM 6882 / CCUG 24695 / JCM 21032 / LMG 3331 / NBRC 15819 / NCTC 12168 / Alc 37) (Ochrobactrum anthropi).